A 258-amino-acid polypeptide reads, in one-letter code: MKNHLNNNEDNSTLIKKKVLFVIAHPDDECMFFTPTIQHYNFIGSEIFVACLSNGNAVGLGKIREKELIDSCIDMGINQENVFFDQTNNFQDGMNIIWDTDLVEKTILSFIKQTSADIVISFDECGISSHPNHISISNGLKQLMKNKSSSTTTTSTTSSSSSSSSLSNRTTNNLNKEIKAYKLETVNIIRKYIGIADIPLTKLLSYDENSTQTFISTQLFPPSSYSPMTKHKSQFVWFRYLFVFLSRYSFINTLIEIK.

The disordered stretch occupies residues 147-170 (KSSSTTTTSTTSSSSSSSSLSNRT). Residues 148-170 (SSSTTTTSTTSSSSSSSSLSNRT) are compositionally biased toward low complexity.

The protein belongs to the PIGL family.

The protein resides in the endoplasmic reticulum membrane. The catalysed reaction is a 6-(N-acetyl-alpha-D-glucosaminyl)-1-(1,2-diacyl-sn-glycero-3-phospho)-1D-myo-inositol + H2O = a 6-(alpha-D-glucosaminyl)-1-(1,2-diacyl-sn-glycero-3-phospho)-1D-myo-inositol + acetate. It functions in the pathway glycolipid biosynthesis; glycosylphosphatidylinositol-anchor biosynthesis. In terms of biological role, involved in the second step of GPI biosynthesis. De-N-acetylation of N-acetylglucosaminyl-phosphatidylinositol. The sequence is that of Probable N-acetylglucosaminyl-phosphatidylinositol de-N-acetylase (pigl) from Dictyostelium discoideum (Social amoeba).